Here is a 295-residue protein sequence, read N- to C-terminus: Succinate dehydrogenase assembly factor 2, mitochondrial (295 aa).

Disordered regions lie at residues 35 to 90, 208 to 227, and 269 to 295; these read AKDN…PELL, PEEG…RTGA, and TGFH…VFDS. Polar residues predominate over residues 45-75; it reads STPSTAPEYRQNQTSKPPNQFMPNSTSTMTN.

This sequence belongs to the SDHAF2 family. Interacts with the flavoprotein subunit within the SDH catalytic dimer.

It localises to the mitochondrion matrix. Its function is as follows. Plays an essential role in the assembly of succinate dehydrogenase (SDH), an enzyme complex (also referred to as respiratory complex II) that is a component of both the tricarboxylic acid (TCA) cycle and the mitochondrial electron transport chain, and which couples the oxidation of succinate to fumarate with the reduction of ubiquinone (coenzyme Q) to ubiquinol. Required for flavinylation (covalent attachment of FAD) of the flavoprotein subunit of the SDH catalytic dimer. This Aspergillus terreus (strain NIH 2624 / FGSC A1156) protein is Succinate dehydrogenase assembly factor 2, mitochondrial.